The sequence spans 130 residues: Transcription antitermination protein NusB (130 aa).

The protein belongs to the NusB family.

Functionally, involved in transcription antitermination. Required for transcription of ribosomal RNA (rRNA) genes. Binds specifically to the boxA antiterminator sequence of the ribosomal RNA (rrn) operons. This chain is Transcription antitermination protein NusB, found in Geobacillus kaustophilus (strain HTA426).